Here is a 124-residue protein sequence, read N- to C-terminus: MPTISQLIRHGRQKQKKRTKSPALKSSPQRRGVCTRVMTFTPKKPNSALRKVARVRLTTGIEVTAYIPGEGHNLQEHNVVLIRGGRVKDLPGVRYHIIRGTLDTLGVDKRRNGRSKYGAKRPKA.

Positions 1 to 32 are disordered; it reads MPTISQLIRHGRQKQKKRTKSPALKSSPQRRG. Positions 9 to 20 are enriched in basic residues; it reads RHGRQKQKKRTK. At aspartate 89 the chain carries 3-methylthioaspartic acid.

Belongs to the universal ribosomal protein uS12 family. Part of the 30S ribosomal subunit. Contacts proteins S8 and S17. May interact with IF1 in the 30S initiation complex.

Its function is as follows. With S4 and S5 plays an important role in translational accuracy. Interacts with and stabilizes bases of the 16S rRNA that are involved in tRNA selection in the A site and with the mRNA backbone. Located at the interface of the 30S and 50S subunits, it traverses the body of the 30S subunit contacting proteins on the other side and probably holding the rRNA structure together. The combined cluster of proteins S8, S12 and S17 appears to hold together the shoulder and platform of the 30S subunit. This chain is Small ribosomal subunit protein uS12, found in Leptospira borgpetersenii serovar Hardjo-bovis (strain JB197).